Consider the following 208-residue polypeptide: Na(+)-translocating NADH-quinone reductase subunit D (208 aa).

5 helical membrane passes run 42–62 (IVMG…ISLV), 72–92 (IIVQ…LLQA), 103–123 (VFVG…AFAM), 131–151 (LIDG…VATV), and 178–198 (NGLF…IWGL).

This sequence belongs to the NqrDE/RnfAE family. Composed of six subunits; NqrA, NqrB, NqrC, NqrD, NqrE and NqrF.

Its subcellular location is the cell inner membrane. It catalyses the reaction a ubiquinone + n Na(+)(in) + NADH + H(+) = a ubiquinol + n Na(+)(out) + NAD(+). Its function is as follows. NQR complex catalyzes the reduction of ubiquinone-1 to ubiquinol by two successive reactions, coupled with the transport of Na(+) ions from the cytoplasm to the periplasm. NqrA to NqrE are probably involved in the second step, the conversion of ubisemiquinone to ubiquinol. In Neisseria gonorrhoeae (strain ATCC 700825 / FA 1090), this protein is Na(+)-translocating NADH-quinone reductase subunit D.